A 634-amino-acid chain; its full sequence is Frizzled and smoothened-like protein D (634 aa).

Positions 1–21 (MINKFKFYLIFLKLILILVNC) are cleaved as a signal peptide. Over 22–257 (QNSLNDYGFG…QMDSVINMSK (236 aa)) the chain is Extracellular. The FZ domain occupies 34–178 (DESSICTSYI…LTKYGYTANG (145 aa)). Asn126, Asn168, Asn215, Asn243, and Asn254 each carry an N-linked (GlcNAc...) asparagine glycan. A helical membrane pass occupies residues 258–278 (AMSSISFVLSLFNVITFGLLI). Over 279-287 (KKKSKYNVC) the chain is Cytoplasmic. Residues 288-308 (IALMAIGSSFIYLSDIINYGV) traverse the membrane as a helical segment. Residues 309 to 335 (GIEKQLCPEPGRVATQRVDSLCGFTGS) lie on the Extracellular side of the membrane. A helical transmembrane segment spans residues 336–356 (IFHIGITLCVLWSMTMGIVLY). Residues 357–368 (SKIKQFKLPNFR) are Cytoplasmic-facing. Residues 369-389 (YFLIGNLSFTVVTLIILASAK) traverse the membrane as a helical segment. Over 390-410 (KFQGGNGFLECWMRDRWYVVA) the chain is Extracellular. The chain crosses the membrane as a helical span at residues 411–431 (IFWIPCGIALLLGVLSICGVI). Over 432 to 454 (FEIYKISKNVSLKDSKVVIRELK) the chain is Cytoplasmic. Residues 455–475 (PFVLVVTVSASLIYLFVFYFD) form a helical membrane-spanning segment. Residues 476-513 (SESKYDFYKKGVEDYILCLLTSENPLDECYTVGPNFNS) are Extracellular-facing. Residues 514–534 (YFMFYFLIRFFGILFFGIFGT) form a helical membrane-spanning segment. Residues 535-634 (SEIARNAWTE…MEIELDSIDI (100 aa)) are Cytoplasmic-facing. The tract at residues 560 to 624 (VSSSTRGGGG…NNNNNDNNNK (65 aa)) is disordered. Composition is skewed to low complexity over residues 572 to 592 (SGIK…NNST) and 609 to 622 (DNTI…NDNN).

The protein belongs to the G-protein coupled receptor Fz/Smo family.

Its subcellular location is the membrane. The protein is Frizzled and smoothened-like protein D (fslD) of Dictyostelium discoideum (Social amoeba).